Reading from the N-terminus, the 87-residue chain is Cell division topological specificity factor (87 aa).

This sequence belongs to the MinE family.

Prevents the cell division inhibition by proteins MinC and MinD at internal division sites while permitting inhibition at polar sites. This ensures cell division at the proper site by restricting the formation of a division septum at the midpoint of the long axis of the cell. This chain is Cell division topological specificity factor, found in Roseiflexus sp. (strain RS-1).